Consider the following 163-residue polypeptide: Lectin-like protein EP153R (163 aa).

Over 1–26 (MFSNKKYIGLINKKEGLKKKIDDYSI) the chain is Cytoplasmic. Residues 27–47 (LIIGILIGTNILSLIINIIGE) traverse the membrane as a helical segment. Residues 48 to 163 (INKPICYQNN…YTDLLFICSK (116 aa)) are Extracellular-facing. Cysteine 63 and cysteine 74 are disulfide-bonded. The segment at 63-162 (CPKDWVGYNN…HYTDLLFICS (100 aa)) is lectin-like. N-linked (GlcNAc...) asparagine; by host glycans are attached at residues asparagine 84, asparagine 96, asparagine 97, asparagine 103, asparagine 109, asparagine 115, asparagine 129, and asparagine 135. Cysteine 92 and cysteine 161 are disulfide-bonded.

Belongs to the asfivirus lectin-like protein family. In terms of assembly, homodimer.

It localises to the host endoplasmic reticulum membrane. In terms of biological role, down-regulates MHC-I expression by impairing the appropriate configuration or presentation into the plasma membrane of the latter. Participates in viral hemadsorption, which may help viral spread. Reduces the transactivating activity of host TP53, thus inhibiting apoptosis. Non-essential for virus growth in swine macrophage cell cultures. This chain is Lectin-like protein EP153R, found in African swine fever virus (isolate Warthog/Namibia/Wart80/1980) (ASFV).